We begin with the raw amino-acid sequence, 870 residues long: A-kinase anchor protein 2 (870 aa).

Disordered regions lie at residues 14 to 43 and 103 to 165; these read PGITSTPHSKDHSSPFYSPSHNGLLTDHHE and IEKA…SSRD. Ser-122 carries the phosphoserine modification. Over residues 133–151 the composition is skewed to polar residues; that stretch reads GHSTDQPQDMLGNSLQAPA. Phosphoserine is present on Ser-152. Residues 152 to 161 are compositionally biased toward low complexity; the sequence is SPSSSTSSHC. A Glycyl lysine isopeptide (Lys-Gly) (interchain with G-Cter in SUMO1); alternate cross-link involves residue Lys-174. A Glycyl lysine isopeptide (Lys-Gly) (interchain with G-Cter in SUMO2); alternate cross-link involves residue Lys-174. Residues 213 to 307 are a coiled coil; it reads EEMIELEKER…QQQQLSTSQL (95 aa). The interval 233-324 is disordered; that stretch reads KNPGIAAKWW…EHLDSIEHTK (92 aa). Positions 259–274 are enriched in basic and acidic residues; the sequence is LESHRKYKERKEKRAQ. Residues 275-302 show a composition bias toward low complexity; sequence QEQLQLQQQQQQQLQQLQQLQQQQQQQL. A compositionally biased stretch (basic and acidic residues) spans 313–324; the sequence is AHEHLDSIEHTK. Position 347 is a phosphoserine (Ser-347). The tract at residues 409 to 436 is disordered; it reads ESQSAGAGTGNAATQGKEGPYSEPSKRG. The segment covering 410–424 has biased composition (low complexity); that stretch reads SQSAGAGTGNAATQG. Phosphoserine is present on residues Ser-472, Ser-476, and Ser-528. Positions 506–543 are enriched in polar residues; sequence FSMDNISDSGASNETPNALQENSLADFSLPQTPQTDNP. Disordered regions lie at residues 506-577 and 595-688; these read FSMD…DPLE and QVDK…RPEG. Thr-537 is subject to Phosphothreonine. The interval 576 to 589 is PKA-RII subunit binding domain; sequence LEYQAGLLVQNAIQ. A compositionally biased stretch (basic and acidic residues) spans 595–608; that stretch reads QVDKAEVHTSKEGS. Ser-641 carries the post-translational modification Phosphoserine. The segment covering 644–665 has biased composition (basic and acidic residues); sequence QEKRDVLPKILPGEDKTLREKG. The stretch at 720 to 755 forms a coiled coil; that stretch reads KLRSRKQRTLSMIEEEIRAAQEREEELKRQRQVRQS. Ser-730, Ser-758, Ser-789, and Ser-796 each carry phosphoserine. Residues 740-814 form a disordered region; it reads QEREEELKRQ…EAAGAQRPKN (75 aa). Positions 755–774 are enriched in polar residues; the sequence is STPSPRAQNAPSLPSRTTCY.

It localises to the apical cell membrane. Binds to regulatory subunit (RII) of protein kinase A. May be involved in establishing polarity in signaling systems or in integrating PKA-RII isoforms with downstream effectors to capture, amplify and focus diffuse, trans-cellular signals carried by cAMP. Binds to and modulates the structure of the actin cytoskeleton. The protein is A-kinase anchor protein 2 of Rattus norvegicus (Rat).